A 195-amino-acid polypeptide reads, in one-letter code: Protein GrpE (195 aa).

Residues 1 to 14 (MQEPHDQEPIEKQK) are compositionally biased toward basic and acidic residues. Residues 1–45 (MQEPHDQEPIEKQKLPGMDDVLETEHSGTVAGNTERAGEDAAPSL) are disordered.

This sequence belongs to the GrpE family. As to quaternary structure, homodimer.

The protein resides in the cytoplasm. Its function is as follows. Participates actively in the response to hyperosmotic and heat shock by preventing the aggregation of stress-denatured proteins, in association with DnaK and GrpE. It is the nucleotide exchange factor for DnaK and may function as a thermosensor. Unfolded proteins bind initially to DnaJ; upon interaction with the DnaJ-bound protein, DnaK hydrolyzes its bound ATP, resulting in the formation of a stable complex. GrpE releases ADP from DnaK; ATP binding to DnaK triggers the release of the substrate protein, thus completing the reaction cycle. Several rounds of ATP-dependent interactions between DnaJ, DnaK and GrpE are required for fully efficient folding. The chain is Protein GrpE from Nitrosomonas europaea (strain ATCC 19718 / CIP 103999 / KCTC 2705 / NBRC 14298).